We begin with the raw amino-acid sequence, 152 residues long: MFRGATLVNLDSKGRLAVPTRHREKLNEESAGLMVCTIDLHQPCLLLYPLPAWEIIEQKLSRLSSMNPAERRVQRLLLGHASECQMDGAGRILLAPTLRQHAGLSKEVMLVGQFNKFELWDEQTWYQQVKDDIDAELSAELPLTDRLQDLSL.

2 consecutive SpoVT-AbrB domains span residues 5-52 (ATLV…PLPA) and 81-124 (ASEC…DEQT).

Belongs to the MraZ family. As to quaternary structure, forms oligomers.

It is found in the cytoplasm. Its subcellular location is the nucleoid. Negatively regulates its own expression and that of the subsequent genes in the proximal part of the division and cell wall (dcw) gene cluster. Acts by binding directly to DNA. May also regulate the expression of genes outside the dcw cluster. The protein is Transcriptional regulator MraZ of Sodalis glossinidius (strain morsitans).